A 95-amino-acid polypeptide reads, in one-letter code: Protein TusB (95 aa).

This sequence belongs to the DsrH/TusB family. In terms of assembly, heterohexamer, formed by a dimer of trimers. The hexameric TusBCD complex contains 2 copies each of TusB, TusC and TusD. The TusBCD complex interacts with TusE.

It localises to the cytoplasm. In terms of biological role, part of a sulfur-relay system required for 2-thiolation of 5-methylaminomethyl-2-thiouridine (mnm(5)s(2)U) at tRNA wobble positions. The chain is Protein TusB from Yersinia pseudotuberculosis serotype O:1b (strain IP 31758).